The sequence spans 162 residues: ATP synthase subunit b 1 (162 aa).

A helical transmembrane segment spans residues 1–21; the sequence is MLLTAEFWVAVAFVAFLVIVW.

It belongs to the ATPase B chain family. In terms of assembly, F-type ATPases have 2 components, F(1) - the catalytic core - and F(0) - the membrane proton channel. F(1) has five subunits: alpha(3), beta(3), gamma(1), delta(1), epsilon(1). F(0) has three main subunits: a(1), b(2) and c(10-14). The alpha and beta chains form an alternating ring which encloses part of the gamma chain. F(1) is attached to F(0) by a central stalk formed by the gamma and epsilon chains, while a peripheral stalk is formed by the delta and b chains.

Its subcellular location is the cell inner membrane. In terms of biological role, f(1)F(0) ATP synthase produces ATP from ADP in the presence of a proton or sodium gradient. F-type ATPases consist of two structural domains, F(1) containing the extramembraneous catalytic core and F(0) containing the membrane proton channel, linked together by a central stalk and a peripheral stalk. During catalysis, ATP synthesis in the catalytic domain of F(1) is coupled via a rotary mechanism of the central stalk subunits to proton translocation. Its function is as follows. Component of the F(0) channel, it forms part of the peripheral stalk, linking F(1) to F(0). This chain is ATP synthase subunit b 1, found in Methylorubrum populi (strain ATCC BAA-705 / NCIMB 13946 / BJ001) (Methylobacterium populi).